The primary structure comprises 109 residues: MGMPNFGDMMKQIQQAGEKMQDVQKQLEKLVTSGEAGGGMVKVTVNGKQRVLSLWIDPEIMDDAEMVQDLVLAAVNSALEASGRMAQEEISKVAGGMINPQDILKNLGQ.

This sequence belongs to the YbaB/EbfC family. Homodimer.

It localises to the cytoplasm. It is found in the nucleoid. In terms of biological role, binds to DNA and alters its conformation. May be involved in regulation of gene expression, nucleoid organization and DNA protection. The protein is Nucleoid-associated protein Plut_1285 of Chlorobium luteolum (strain DSM 273 / BCRC 81028 / 2530) (Pelodictyon luteolum).